A 217-amino-acid polypeptide reads, in one-letter code: UPF0319 protein VS_II0881 (217 aa).

An N-terminal signal peptide occupies residues 1-21 (MKTIQSIALLSAIVAAPSVLA).

This sequence belongs to the UPF0319 family.

This Vibrio atlanticus (strain LGP32) (Vibrio splendidus (strain Mel32)) protein is UPF0319 protein VS_II0881.